A 222-amino-acid polypeptide reads, in one-letter code: Eukaryotic translation initiation factor 3 subunit K (222 aa).

In terms of domain architecture, PCI spans 46–208 (YDLEANLAVL…KIKTKNITEK (163 aa)).

The protein belongs to the eIF-3 subunit K family. Component of the eukaryotic translation initiation factor 3 (eIF-3) complex. The eIF-3 complex interacts with pix.

It localises to the cytoplasm. In terms of biological role, component of the eukaryotic translation initiation factor 3 (eIF-3) complex, which is involved in protein synthesis of a specialized repertoire of mRNAs and, together with other initiation factors, stimulates binding of mRNA and methionyl-tRNAi to the 40S ribosome. The eIF-3 complex specifically targets and initiates translation of a subset of mRNAs involved in cell proliferation. This is Eukaryotic translation initiation factor 3 subunit K from Drosophila grimshawi (Hawaiian fruit fly).